A 40-amino-acid polypeptide reads, in one-letter code: Cytochrome c3 hydrogenase small chain (40 aa).

Fe cation is required as a cofactor.

The enzyme catalyses 2 Fe(III)-[cytochrome c3] + H2 = 2 Fe(II)-[cytochrome c3] + 2 H(+). This chain is Cytochrome c3 hydrogenase small chain (hoxK), found in Acidithiobacillus ferrooxidans (Thiobacillus ferrooxidans).